The primary structure comprises 834 residues: Protein kintoun (834 aa).

Disordered stretches follow at residues 214–239 (TAEE…KQEP), 374–415 (SRED…SVAP), 547–669 (KGKV…STGR), and 759–834 (KKNQ…EMDD). Phosphoserine is present on S378. A compositionally biased stretch (acidic residues) spans 389–398 (PVEEDPDGEL). The span at 552–571 (AKKDNAPLDVKFERNQEGHA) shows a compositional bias: basic and acidic residues. Over residues 582 to 596 (EEEEDKENQDQEPES) the composition is skewed to acidic residues. The segment covering 597–607 (DQQQQQQVQNK) has biased composition (low complexity). 2 stretches are compositionally biased toward basic residues: residues 608–619 (KPGKKQRKKNKK) and 759–773 (KKNQ…RAQQ). Phosphoserine is present on S777. A compositionally biased stretch (basic and acidic residues) spans 785 to 798 (EETRGSALKQEENP).

It belongs to the PIH1 family. Kintoun subfamily. Interacts with Pp1alpha-96A, Pp1-87B, Pp1-13C and flw.

It is found in the cytoplasm. Functionally, required for cytoplasmic pre-assembly of axonemal dyneins, thereby playing a central role in motility in cilia and flagella. Involved in pre-assembly of dynein arm complexes in the cytoplasm before intraflagellar transport loads them for the ciliary compartment. This Drosophila melanogaster (Fruit fly) protein is Protein kintoun.